Consider the following 403-residue polypeptide: Pantothenate kinase (403 aa).

Phosphoserine occurs at positions 80, 82, and 84.

The protein belongs to the type II pantothenate kinase family.

It localises to the cytoplasm. The protein resides in the nucleus. It carries out the reaction (R)-pantothenate + ATP = (R)-4'-phosphopantothenate + ADP + H(+). The protein operates within cofactor biosynthesis; coenzyme A biosynthesis; CoA from (R)-pantothenate: step 1/5. With respect to regulation, regulated by feedback inhibition by malonyl-CoA. Functionally, plays a role in the physiological regulation of the intracellular CoA concentration. The sequence is that of Pantothenate kinase from Schizosaccharomyces pombe (strain 972 / ATCC 24843) (Fission yeast).